A 231-amino-acid chain; its full sequence is Adenosylcobinamide-GDP ribazoletransferase (231 aa).

6 helical membrane passes run 29–49 (ICAY…SMKL), 53–73 (NFLW…LFHF), 101–121 (IGPF…YAFL), 126–146 (IDLI…LHFG), 167–187 (LISL…IISL), and 211–231 (DVLG…LSLI).

Belongs to the CobS family. It depends on Mg(2+) as a cofactor.

The protein localises to the cell inner membrane. The catalysed reaction is alpha-ribazole + adenosylcob(III)inamide-GDP = adenosylcob(III)alamin + GMP + H(+). It catalyses the reaction alpha-ribazole 5'-phosphate + adenosylcob(III)inamide-GDP = adenosylcob(III)alamin 5'-phosphate + GMP + H(+). Its pathway is cofactor biosynthesis; adenosylcobalamin biosynthesis; adenosylcobalamin from cob(II)yrinate a,c-diamide: step 7/7. In terms of biological role, joins adenosylcobinamide-GDP and alpha-ribazole to generate adenosylcobalamin (Ado-cobalamin). Also synthesizes adenosylcobalamin 5'-phosphate from adenosylcobinamide-GDP and alpha-ribazole 5'-phosphate. The protein is Adenosylcobinamide-GDP ribazoletransferase of Kosmotoga olearia (strain ATCC BAA-1733 / DSM 21960 / TBF 19.5.1).